Consider the following 146-residue polypeptide: Globin (146 aa).

The residue at position 1 (Ser1) is an N-acetylserine. In terms of domain architecture, Globin spans 1-146; it reads SLSGAEADLL…IIDALKKAGK (146 aa). His95 contacts heme b.

The protein belongs to the globin family. As to quaternary structure, monomer.

In Bursatella leachii (Ragged sea hare), this protein is Globin.